A 405-amino-acid chain; its full sequence is Cysteine desulfurase IscS (405 aa).

Pyridoxal 5'-phosphate-binding positions include 75 to 76 (AT), Asn-155, Gln-183, and 203 to 205 (SGH). An N6-(pyridoxal phosphate)lysine modification is found at Lys-206. Thr-243 lines the pyridoxal 5'-phosphate pocket. Residue Cys-329 is the Cysteine persulfide intermediate of the active site. Cys-329 provides a ligand contact to [2Fe-2S] cluster.

This sequence belongs to the class-V pyridoxal-phosphate-dependent aminotransferase family. NifS/IscS subfamily. Homodimer. Forms a heterotetramer with IscU, interacts with other sulfur acceptors. Pyridoxal 5'-phosphate serves as cofactor.

It localises to the cytoplasm. It catalyses the reaction (sulfur carrier)-H + L-cysteine = (sulfur carrier)-SH + L-alanine. It functions in the pathway cofactor biosynthesis; iron-sulfur cluster biosynthesis. In terms of biological role, master enzyme that delivers sulfur to a number of partners involved in Fe-S cluster assembly, tRNA modification or cofactor biosynthesis. Catalyzes the removal of elemental sulfur atoms from cysteine to produce alanine. Functions as a sulfur delivery protein for Fe-S cluster synthesis onto IscU, an Fe-S scaffold assembly protein, as well as other S acceptor proteins. This is Cysteine desulfurase IscS from Pseudoalteromonas translucida (strain TAC 125).